The primary structure comprises 551 residues: Protein GPR107 (551 aa).

Positions 1–33 are cleaved as a signal peptide; it reads MAVPVPLGRFGSFCLRLLRLLALLELLVHPVLG. Residues 40 to 262 are Extracellular-facing; the sequence is LKDDVRHKVH…YLSAGEIPLP (223 aa). Residues Asn-64 and Asn-209 are each glycosylated (N-linked (GlcNAc...) asparagine). A disulfide bridge connects residues Cys-106 and Cys-226. The helical transmembrane segment at 263-283 threads the bilayer; the sequence is KLYVSMALFFFLSGTIWIHIL. At 284–292 the chain is on the cytoplasmic side; that stretch reads RKRRNDVFK. A helical membrane pass occupies residues 293 to 313; sequence IHWLMAALPFTKSLSLVFHAI. At 314 to 336 the chain is on the extracellular side; the sequence is DYHYISSQGFPIEGWAVVYYITH. The chain crosses the membrane as a helical span at residues 337-357; it reads LLKGALLFITIALIGTGWAFI. At 358-367 the chain is on the cytoplasmic side; it reads KHILSDKDKK. Residues 368-388 traverse the membrane as a helical segment; it reads IFMIVIPLQVLANVAYIIIES. At 389-401 the chain is on the extracellular side; the sequence is TEEGTTEYGLWKD. A helical membrane pass occupies residues 402 to 422; it reads SLFLVDLLCCGAILFPVVWSI. Residues 423–449 lie on the Cytoplasmic side of the membrane; that stretch reads RHLQEASATDGKAAINLAKLRLFRHYY. The helical transmembrane segment at 450-470 threads the bilayer; sequence VLIVCYIYFTRIIAFLLKFAV. Residues 471–475 lie on the Extracellular side of the membrane; that stretch reads PFQWK. Residues 476-495 traverse the membrane as a helical segment; sequence WLYQLLDETATLVFFVLTGY. The Cytoplasmic portion of the chain corresponds to 496–551; it reads KFRPASDNPYLQLSQEDDDLEMESVVTTSGVMENMKKVKKVSNGAVEPQGSWEGTA. Ser-537 carries the phosphoserine modification.

Belongs to the LU7TM family. Post-translationally, cleaved by FURIN to yield two fragments that remain associated via a disulfide bond.

Its subcellular location is the cell membrane. It is found in the golgi apparatus. The protein localises to the trans-Golgi network membrane. Its function is as follows. Has been proposed to act as a receptor for neuronostatin, a peptide derived from the somatostatin/SST precursor. Involved in blood sugar regulation through the induction of glucagon in response to low glucose. In Mus musculus (Mouse), this protein is Protein GPR107 (Gpr107).